The primary structure comprises 245 residues: tRNA pseudouridine synthase A (245 aa).

Residue Asp-52 is the Nucleophile of the active site. Tyr-111 contacts substrate.

The protein belongs to the tRNA pseudouridine synthase TruA family. As to quaternary structure, homodimer.

It carries out the reaction uridine(38/39/40) in tRNA = pseudouridine(38/39/40) in tRNA. Functionally, formation of pseudouridine at positions 38, 39 and 40 in the anticodon stem and loop of transfer RNAs. In Rhodopseudomonas palustris (strain HaA2), this protein is tRNA pseudouridine synthase A.